The sequence spans 497 residues: GDP-fucose protein O-fucosyltransferase 4 (497 aa).

The Cytoplasmic segment spans residues 1-6 (MACRRR). Residues 7–27 (LLPCAGLGLFGVLCWVWVSFA) traverse the membrane as a helical; Signal-anchor for type II membrane protein segment. Topologically, residues 28–497 (SFPDDQLPLE…ITERRARGKH (470 aa)) are lumenal. Asn-169 carries N-linked (GlcNAc...) asparagine glycosylation. A disulfide bond links Cys-392 and Cys-395. The segment at 406-427 (RAHRKDPERNPPPLPKMASNSH) is disordered. Asn-474 carries an N-linked (GlcNAc...) asparagine glycan.

Belongs to the glycosyltransferase 10 family.

It localises to the endoplasmic reticulum membrane. It catalyses the reaction L-threonyl-[protein] + GDP-beta-L-fucose = 3-O-(alpha-L-fucosyl)-L-threonyl-[protein] + GDP + H(+). The catalysed reaction is L-seryl-[protein] + GDP-beta-L-fucose = 3-O-(alpha-L-fucosyl)-L-seryl-[protein] + GDP + H(+). The protein operates within protein modification; protein glycosylation. Functionally, protein O-fucosyltransferase that specifically catalyzes O-fucosylation of serine or threonine residues in EMI domains of target proteins. Attaches fucose through an O-glycosidic linkage. O-fucosylation of EMI domain-containing proteins may be required for facilitating protein folding and secretion. The protein is GDP-fucose protein O-fucosyltransferase 4 (fut11) of Oryzias latipes (Japanese rice fish).